A 413-amino-acid polypeptide reads, in one-letter code: S-adenosylmethionine synthase (413 aa).

His-15 serves as a coordination point for ATP. Asp-17 is a Mg(2+) binding site. Glu-43 contacts K(+). The L-methionine site is built by Glu-56 and Gln-100. The tract at residues 100–110 (QSPDISQGVNE) is flexible loop. Residues 171–173 (DGK), 248–249 (KF), Asp-257, 263–264 (RK), Ala-280, and Lys-284 contribute to the ATP site. Asp-257 provides a ligand contact to L-methionine. Lys-288 is a binding site for L-methionine.

It belongs to the AdoMet synthase family. In terms of assembly, homotetramer; dimer of dimers. It depends on Mg(2+) as a cofactor. Requires K(+) as cofactor.

The protein resides in the cytoplasm. The catalysed reaction is L-methionine + ATP + H2O = S-adenosyl-L-methionine + phosphate + diphosphate. Its pathway is amino-acid biosynthesis; S-adenosyl-L-methionine biosynthesis; S-adenosyl-L-methionine from L-methionine: step 1/1. Functionally, catalyzes the formation of S-adenosylmethionine (AdoMet) from methionine and ATP. The overall synthetic reaction is composed of two sequential steps, AdoMet formation and the subsequent tripolyphosphate hydrolysis which occurs prior to release of AdoMet from the enzyme. The polypeptide is S-adenosylmethionine synthase (Prochlorococcus marinus subsp. pastoris (strain CCMP1986 / NIES-2087 / MED4)).